The following is a 498-amino-acid chain: ATP synthase subunit beta, chloroplastic (498 aa).

Residue 172 to 179 (GGAGVGKT) participates in ATP binding.

It belongs to the ATPase alpha/beta chains family. F-type ATPases have 2 components, CF(1) - the catalytic core - and CF(0) - the membrane proton channel. CF(1) has five subunits: alpha(3), beta(3), gamma(1), delta(1), epsilon(1). CF(0) has four main subunits: a(1), b(1), b'(1) and c(9-12).

The protein resides in the plastid. It localises to the chloroplast thylakoid membrane. It catalyses the reaction ATP + H2O + 4 H(+)(in) = ADP + phosphate + 5 H(+)(out). Its function is as follows. Produces ATP from ADP in the presence of a proton gradient across the membrane. The catalytic sites are hosted primarily by the beta subunits. The polypeptide is ATP synthase subunit beta, chloroplastic (Daucus carota (Wild carrot)).